Reading from the N-terminus, the 473-residue chain is Rop guanine nucleotide exchange factor 3 (473 aa).

Residues 1–28 are disordered; it reads MENLSNPDENDDHQSPRSIDQNDQSAVE. Residues 16 to 28 show a composition bias toward polar residues; that stretch reads PRSIDQNDQSAVE. Positions 95-473 constitute a PRONE domain; sequence LVVQEISEPE…YVDKTMRGSE (379 aa).

Guanine-nucleotide exchange factor (GEF) that acts as an activator of Rop (Rho of plants) GTPases by promoting the exchange of GDP for GTP. The sequence is that of Rop guanine nucleotide exchange factor 3 (ROPGEF3) from Arabidopsis thaliana (Mouse-ear cress).